The following is a 444-amino-acid chain: S-locus-specific glycoprotein BS29-1 (444 aa).

An N-terminal signal peptide occupies residues 1–28 (MRGVIPNYHHSYTLLFFVILVLFPHVFS). The 129-residue stretch at 31–159 (TLSPNEALTI…KTTALDRFMW (129 aa)) folds into the Bulb-type lectin domain. 5 N-linked (GlcNAc...) asparagine glycosylation sites follow: Asn-43, Asn-125, Asn-180, Asn-243, and Asn-396. Residues 356 to 437 (CGEGDGFLRM…GGQDLYLKVA (82 aa)) enclose the PAN domain. 2 disulfide bridges follow: Cys-387–Cys-412 and Cys-395–Cys-397.

Stigma.

In terms of biological role, involved in sporophytic self-incompatibility system (the inability of flowering plants to achieve self-fertilization). The polypeptide is S-locus-specific glycoprotein BS29-1 (SLSG) (Brassica oleracea var. alboglabra (Chinese kale)).